Consider the following 150-residue polypeptide: MKYQQLENLESGWKWKYLVKKHREGELITRYIEASAAQEAVDVLLSLENEPVLVNNWIDKHMNPELVNRMKQTIRARRKRHFNAEHQHTRKKSIDLEFIVWQRLAGLAQRRGKTLSETIVQLIEDAENKEKYANKMSSLKQDLQALLGKE.

It belongs to the MatP family. As to quaternary structure, homodimer.

The protein resides in the cytoplasm. Required for spatial organization of the terminus region of the chromosome (Ter macrodomain) during the cell cycle. Prevents early segregation of duplicated Ter macrodomains during cell division. Binds specifically to matS, which is a 13 bp signature motif repeated within the Ter macrodomain. The protein is Macrodomain Ter protein of Escherichia coli (strain SMS-3-5 / SECEC).